Consider the following 441-residue polypeptide: Histone-lysine N-methyltransferase set9 (441 aa).

The SET domain occupies Cys108–Ser221.

This sequence belongs to the class V-like SAM-binding methyltransferase superfamily. Histone-lysine methyltransferase family. Suvar4-20 subfamily.

It is found in the nucleus. The protein resides in the chromosome. The catalysed reaction is L-lysyl(20)-[histone H4] + 3 S-adenosyl-L-methionine = N(6),N(6),N(6)-trimethyl-L-lysyl(20)-[histone H4] + 3 S-adenosyl-L-homocysteine + 3 H(+). Histone methyltransferase that specifically trimethylates 'Lys-20' of histone H4 to form H4K20me3. H4 'Lys-20' methylation is apparently not involved in the regulation of gene expression or heterochromatin function but participates in DNA damage response by giving a 'histone mark' required for the recruitment of the checkpoint protein Crb2 to sites of DNA damage. The sequence is that of Histone-lysine N-methyltransferase set9 (set9) from Schizosaccharomyces pombe (strain 972 / ATCC 24843) (Fission yeast).